The sequence spans 301 residues: Glycine--tRNA ligase alpha subunit (301 aa).

Belongs to the class-II aminoacyl-tRNA synthetase family. Tetramer of two alpha and two beta subunits.

The protein resides in the cytoplasm. It catalyses the reaction tRNA(Gly) + glycine + ATP = glycyl-tRNA(Gly) + AMP + diphosphate. In Neisseria meningitidis serogroup C (strain 053442), this protein is Glycine--tRNA ligase alpha subunit.